The following is a 671-amino-acid chain: Peroxisomal membrane protein PEX17 (671 aa).

The next 8 membrane-spanning stretches (helical) occupy residues 127 to 147, 187 to 207, 212 to 232, 258 to 278, 318 to 338, 372 to 392, 475 to 495, and 504 to 524; these read LPLL…GPTL, VPVL…DVAI, FLQV…GTAL, VVAL…HVDI, YLKW…NMLL, FAAY…EYAP, LVEA…NAVV, and MGGV…VLAI.

The protein localises to the peroxisome membrane. Its function is as follows. Involved in peroxisome biosynthesis. Required for the import of a subset of matrix proteins into peroxisomes. The chain is Peroxisomal membrane protein PEX17 (PEX17) from Yarrowia lipolytica (strain CLIB 122 / E 150) (Yeast).